A 564-amino-acid polypeptide reads, in one-letter code: Tripeptidyl-peptidase 1 (564 aa).

An N-terminal signal peptide occupies residues 1–19 (MGLQACLLGLFALILSGKC). Positions 20–195 (SYSPEPDQRR…PEPQVTGTVG (176 aa)) are cleaved as a propeptide — removed in mature form. C111 and C122 are disulfide-bonded. The region spanning 199–564 (GVTPSVIRKR…PALPKTLLNP (366 aa)) is the Peptidase S53 domain. 2 N-linked (GlcNAc...) asparagine glycosylation sites follow: N210 and N222. Catalysis depends on charge relay system residues E272 and D276. N-linked (GlcNAc...) asparagine glycosylation is found at N286, N313, and N443. 2 disulfides stabilise this stretch: C365/C527 and C523/C538. The active-site Charge relay system is the S475. Ca(2+) is bound by residues D518 and V519. Residues G540, G542, and D544 each coordinate Ca(2+).

Monomer. Interacts with CLN5. Interacts with CLN3. Requires Ca(2+) as cofactor. Activated by autocatalytic proteolytical processing upon acidification. N-glycosylation is required for processing and activity.

The protein localises to the lysosome. The protein resides in the melanosome. It carries out the reaction Release of an N-terminal tripeptide from a polypeptide, but also has endopeptidase activity.. In terms of biological role, lysosomal serine protease with tripeptidyl-peptidase I activity. May act as a non-specific lysosomal peptidase which generates tripeptides from the breakdown products produced by lysosomal proteinases. Requires substrates with an unsubstituted N-terminus. In Pongo abelii (Sumatran orangutan), this protein is Tripeptidyl-peptidase 1 (TPP1).